The sequence spans 96 residues: Transcription and mRNA export factor SUS1 (96 aa).

Lys68 participates in a covalent cross-link: Glycyl lysine isopeptide (Lys-Gly) (interchain with G-Cter in ubiquitin).

It belongs to the ENY2 family. Component of the nuclear pore complex (NPC)-associated TREX-2 complex (transcription and export complex 2), composed of at least SUS1, SAC3, THP1, SEM1, and CDC31. TREX-2 contains 2 SUS1 chains. The TREX-2 complex interacts with the nucleoporin NUP1. Component of the 1.8 MDa SAGA transcription coactivator-HAT complex. SAGA is built of 5 distinct domains with specialized functions. Within the SAGA complex, SUS1, SGF11, SGF73 and UBP8 form an additional subcomplex of SAGA called the DUB module (deubiquitination module). Interacts directly with THP1, SAC3, SGF11, and with the RNA polymerase II.

The protein localises to the nucleus. It localises to the nucleoplasm. Its subcellular location is the cytoplasm. The protein resides in the P-body. In terms of biological role, involved in mRNA export coupled transcription activation by association with both the TREX-2 and the SAGA complexes. At the promoters, SAGA is required for recruitment of the basal transcription machinery. It influences RNA polymerase II transcriptional activity through different activities such as TBP interaction and promoter selectivity, interaction with transcription activators, and chromatin modification through histone acetylation and deubiquitination. Within the SAGA complex, participates in a subcomplex required for deubiquitination of H2B and for the maintenance of steady-state H3 methylation levels. The TREX-2 complex functions in docking export-competent ribonucleoprotein particles (mRNPs) to the nuclear entrance of the nuclear pore complex (nuclear basket). TREX-2 participates in mRNA export and accurate chromatin positioning in the nucleus by tethering genes to the nuclear periphery. May also be involved in cytoplasmic mRNA decay by interaction with components of P-bodies. This chain is Transcription and mRNA export factor SUS1, found in Saccharomyces cerevisiae (strain RM11-1a) (Baker's yeast).